The sequence spans 974 residues: ATP-dependent RNA helicase glh-2 (974 aa).

Residues 212–435 form a disordered region; that stretch reads HESGFGGGKS…SGFGGGNDGG (224 aa). Residues 215–250 show a composition bias toward gly residues; sequence GFGGGKSGGFGGGNSGGSGFGSGGNSNGFGSGGGGQ. The span at 256–267 shows a compositional bias: polar residues; it reads NNNCFNCQQPGH. 2 CCHC-type zinc fingers span residues 257 to 274 and 282 to 299; these read NNCFNCQQPGHRSNDCPE and RVCYNCQQPGHNSRDCPE. 2 stretches are compositionally biased toward basic and acidic residues: residues 268–282 and 293–307; these read RSNDCPEPKKEREPR and NSRDCPEERKPREGR. Residues 309-364 are compositionally biased toward gly residues; sequence GFTGGSSGFGGGNGGGTGFDSGLTNGFGSGNNGESGFGSGGFGGNSNGFGSGGGGQ. Residues 370-381 show a composition bias toward polar residues; it reads NNNCFNCQQPGH. 2 consecutive CCHC-type zinc fingers follow at residues 371–388 and 396–413; these read NNCFNCQQPGHRSNDCPE and RVCYNCQQPGHNSRDCPE. 2 stretches are compositionally biased toward basic and acidic residues: residues 382–396 and 407–421; these read RSNDCPEPKKEREPR and NSRDCPEERKPREGR. Gly residues predominate over residues 426–435; that stretch reads SGFGGGNDGG. CCHC-type zinc fingers lie at residues 453–470 and 473–490; these read MKCFNCKGEGHRSAECPE and RGCFNCGEQGHRSNECPN. Positions 552–580 match the Q motif motif; sequence KTFSEANLGETMKKNVAHAGYTKTTPIQQ. A Helicase ATP-binding domain is found at 583–767; it reads LPLIHQGHDI…RNHLKEGYIM (185 aa). 596-603 is an ATP binding site; the sequence is AQTGSGKT. The short motif at 710 to 713 is the DEAD box element; that stretch reads DEAD. Residues 803-950 form the Helicase C-terminal domain; the sequence is DIDSYTTEKN…LVPEWMQGAS (148 aa).

This sequence belongs to the DEAD box helicase family. DDX4/VASA subfamily. As to quaternary structure, interacts (via C-terminus) with kgb-1.

It catalyses the reaction ATP + H2O = ADP + phosphate + H(+). Its function is as follows. Probable ATP-binding RNA helicase. The chain is ATP-dependent RNA helicase glh-2 (glh-2) from Caenorhabditis elegans.